The following is a 361-amino-acid chain: Phosphoserine aminotransferase (361 aa).

Residue arginine 43 coordinates L-glutamate. Residues 77–78 (AS), tryptophan 103, threonine 153, aspartate 173, and glutamine 196 each bind pyridoxal 5'-phosphate. At lysine 197 the chain carries N6-(pyridoxal phosphate)lysine. 238–239 (NT) serves as a coordination point for pyridoxal 5'-phosphate.

Belongs to the class-V pyridoxal-phosphate-dependent aminotransferase family. SerC subfamily. As to quaternary structure, homodimer. Pyridoxal 5'-phosphate serves as cofactor.

It localises to the cytoplasm. It catalyses the reaction O-phospho-L-serine + 2-oxoglutarate = 3-phosphooxypyruvate + L-glutamate. The catalysed reaction is 4-(phosphooxy)-L-threonine + 2-oxoglutarate = (R)-3-hydroxy-2-oxo-4-phosphooxybutanoate + L-glutamate. Its pathway is amino-acid biosynthesis; L-serine biosynthesis; L-serine from 3-phospho-D-glycerate: step 2/3. It functions in the pathway cofactor biosynthesis; pyridoxine 5'-phosphate biosynthesis; pyridoxine 5'-phosphate from D-erythrose 4-phosphate: step 3/5. In terms of biological role, catalyzes the reversible conversion of 3-phosphohydroxypyruvate to phosphoserine and of 3-hydroxy-2-oxo-4-phosphonooxybutanoate to phosphohydroxythreonine. This Pseudomonas entomophila (strain L48) protein is Phosphoserine aminotransferase.